Here is a 498-residue protein sequence, read N- to C-terminus: Glycerol kinase (498 aa).

Thr12 provides a ligand contact to ADP. ATP-binding residues include Thr12, Thr13, and Ser14. Residue Thr12 coordinates sn-glycerol 3-phosphate. Arg16 serves as a coordination point for ADP. Residues Arg82, Glu83, Tyr135, and Asp245 each contribute to the sn-glycerol 3-phosphate site. Glycerol-binding residues include Arg82, Glu83, Tyr135, Asp245, and Gln246. The ADP site is built by Thr267 and Gly310. ATP contacts are provided by Thr267, Gly310, Gln314, and Gly411. ADP-binding residues include Gly411 and Asn415.

The protein belongs to the FGGY kinase family. In terms of assembly, homotetramer and homodimer (in equilibrium).

The catalysed reaction is glycerol + ATP = sn-glycerol 3-phosphate + ADP + H(+). Its pathway is polyol metabolism; glycerol degradation via glycerol kinase pathway; sn-glycerol 3-phosphate from glycerol: step 1/1. Activated by phosphorylation and inhibited by fructose 1,6-bisphosphate (FBP). Its function is as follows. Key enzyme in the regulation of glycerol uptake and metabolism. Catalyzes the phosphorylation of glycerol to yield sn-glycerol 3-phosphate. The protein is Glycerol kinase of Clostridium botulinum (strain Eklund 17B / Type B).